We begin with the raw amino-acid sequence, 768 residues long: Cullin-3 (768 aa).

Residue S2 is modified to N-acetylserine. Residues 2 to 41 (SNLSKGTGSRKDTKMRIRAFPMTMDEKYVNSIWDLLKNAI) form an interaction with KLHL18 region. S585 carries the phosphoserine modification. The interval 677–698 (VAAKQGESDPERKETRQKVDDD) is disordered. Positions 682-698 (GESDPERKETRQKVDDD) are enriched in basic and acidic residues. The region spanning 698–760 (DRKHEIEAAI…REYLARTPED (63 aa)) is the Cullin neddylation domain. K712 participates in a covalent cross-link: Glycyl lysine isopeptide (Lys-Gly) (interchain with G-Cter in NEDD8).

It belongs to the cullin family. As to quaternary structure, forms neddylation-dependent homodimers. Component of multiple BCR (BTB-CUL3-RBX1) E3 ubiquitin-protein ligase complexes formed of CUL3, RBX1 and a variable BTB domain-containing protein acting as both, adapter to cullin and substrate recognition subunit. The BCR complex may be active as a heterodimeric complex, in which NEDD8, covalently attached to one CUL3 molecule, binds to the C-terminus of a second CUL3 molecule. Interacts with RBX1, RNF7 and TIP120A/CAND1. Part of the BCR(SPOP) containing SPOP, and of BCR containing homodimeric SPOPL or the heterodimer formed by SPOP and SPOPL. Part of the probable BCR(KLHL9-KLHL13) complex with BTB domain proteins KLHL9 and KLHL13. Part of the BCR(KLHL41) complex containing KLHL41. Component of the BCR(KLHL12) E3 ubiquitin ligase complex, at least composed of CUL3 and KLHL12 and RBX1. Component of the BCR(KLHL3) E3 ubiquitin ligase complex, at least composed of CUL3 and KLHL3 and RBX1. Part of the BCR(ENC1) complex containing ENC1. Part of a complex consisting of BMI1/PCGF4, CUL3 and SPOP. Part of a complex consisting of BRMS1, CUL3 and SPOP. Component of the BCR(KLHL21) E3 ubiquitin ligase complex, at least composed of CUL3, KLHL21 and RBX1. Component of the BCR(KLHL22) E3 ubiquitin ligase complex, at least composed of CUL3, KLHL22 and RBX1. Component of the BCR(KLHL25) E3 ubiquitin ligase complex, at least composed of CUL3, KLHL25 and RBX1. Part of a complex consisting of MACROH2A1, CUL3 and SPOP. Component of the BCR(KLHL42) E3 ubiquitin ligase complex, at least composed of CUL3 and KLHL42. Component of the BCR(KBTBD8) E3 ubiquitin ligase complex, at least composed of CUL3, KBTBD8 and RBX1. Interacts with KLHL42 (via the BTB domain). Interacts with KATNA1; the interaction is enhanced by KLHL42. Interacts with KCTD5, KLHL9, KLHL11, KLHL13, GAN, ZBTB16, KLHL3, KLHL15, KLHL20, KLHL36, GMCL2, BTBD1. Part of a complex that contains CUL3, RBX1 and GAN. Interacts (via BTB domain) with KLHL17; the interaction regulates surface GRIK2 expression. Interacts with KCTD7. Part of the BCR(GAN) complex containing GAN. Part of the BCR(KEAP1) complex containing KEAP1. Interacts with KAT5 and ATF2. Interacts with KCTD17 in the BCR(KCTD17) E3 ubiquitin ligase complex, at least composed of CUL3, KCTD17 and RBX1. Interacts (when neddylated) with ARIH1; leading to activate the E3 ligase activity of ARIH1. Interacts with COPS9. Interacts with PPP2R5B; this interaction is indirect and mediated through KLHL15-binding and leads to PPP2R5B proteasomal degradation. Interacts with RBBP8/CtIP; this interaction is indirect and mediated through KLHL15-binding and leads to RBBP8 proteasomal degradation. Interacts with KLHL24 in the BCR(KLHL24) E3 ubiquitin ligase complex, composed of CUL3, RBX1 and KLHL24. Interacts with RHOBTB2. Interacts with CYCE. Interacts with KLHL10. Interacts with AURKA and KLHL18 (via BTB domain). Interacts (unneddylated form) with DCUN1D1, DCUN1D2, DCUN1D3, DCUN1D4 and DCUN1D5; these interactions promote the cullin neddylation. Component of a BCR3 (BTB-CUL3-RBX1) E3 ubiquitin ligase complex, also named Cul3-RING ubiquitin ligase complex CUL3(KBTBD6/7), composed of CUL3, RBX1, KBTBD6 and KBTBD7. Component of the BCR(KBTBD2) E3 ubiquitin ligase complex, at least composed of CUL3, KBTBD2 and RBX1. Interacts with KBTBD2 (via the BTB domain). Component of the BCR(KBTBD4) E3 ubiquitin ligase complex, at least composed of CUL3, KBTBD4 and RBX1. In terms of processing, neddylated. Attachment of NEDD8 is required for the E3 ubiquitin-protein ligase activity of the BCR complex. Deneddylated via its interaction with the COP9 signalosome (CSN) complex. Widely expressed, with highest expression in brain, spleen and testis. In the testis, it is mainly expressed in spermatids.

The protein localises to the nucleus. The protein resides in the golgi apparatus. It is found in the cell projection. It localises to the cilium. Its subcellular location is the flagellum. The protein localises to the cytoplasm. The protein resides in the cytoskeleton. It is found in the spindle. It localises to the microtubule organizing center. Its subcellular location is the centrosome. The protein localises to the spindle pole. It participates in protein modification; protein ubiquitination. Its function is as follows. Core component of multiple cullin-RING-based BCR (BTB-CUL3-RBX1) E3 ubiquitin-protein ligase complexes which mediate the ubiquitination and subsequent proteasomal degradation of target proteins. BCR complexes and ARIH1 collaborate in tandem to mediate ubiquitination of target proteins. As a scaffold protein may contribute to catalysis through positioning of the substrate and the ubiquitin-conjugating enzyme. The E3 ubiquitin-protein ligase activity of the complex is dependent on the neddylation of the cullin subunit and is inhibited by the association of the deneddylated cullin subunit with TIP120A/CAND1. The functional specificity of the BCR complex depends on the BTB domain-containing protein as the substrate recognition component. BCR(KLHL42) is involved in ubiquitination of KATNA1. BCR(SPOP) is involved in ubiquitination of BMI1/PCGF4, BRMS1, MACROH2A1 and DAXX, GLI2 and GLI3. Can also form a cullin-RING-based BCR (BTB-CUL3-RBX1) E3 ubiquitin-protein ligase complex containing homodimeric SPOPL or the heterodimer formed by SPOP and SPOPL; these complexes have lower ubiquitin ligase activity. BCR(KLHL9-KLHL13) controls the dynamic behavior of AURKB on mitotic chromosomes and thereby coordinates faithful mitotic progression and completion of cytokinesis. BCR(KLHL12) is involved in ER-Golgi transport by regulating the size of COPII coats, thereby playing a key role in collagen export, which is required for embryonic stem (ES) cells division: BCR(KLHL12) acts by mediating monoubiquitination of SEC31 (SEC31A or SEC31B). BCR(KLHL3) acts as a regulator of ion transport in the distal nephron; by mediating ubiquitination of WNK4. The BCR(KLHL20) E3 ubiquitin ligase complex is involved in interferon response and anterograde Golgi to endosome transport: it mediates both ubiquitination leading to degradation and 'Lys-33'-linked ubiquitination. The BCR(KLHL21) E3 ubiquitin ligase complex regulates localization of the chromosomal passenger complex (CPC) from chromosomes to the spindle midzone in anaphase and mediates the ubiquitination of AURKB. The BCR(KLHL22) ubiquitin ligase complex mediates monoubiquitination of PLK1, leading to PLK1 dissociation from phosphoreceptor proteins and subsequent removal from kinetochores, allowing silencing of the spindle assembly checkpoint (SAC) and chromosome segregation. The BCR(KLHL22) ubiquitin ligase complex is also responsible for the amino acid-stimulated 'Lys-48' polyubiquitination and proteasomal degradation of DEPDC5. Through the degradation of DEPDC5, releases the GATOR1 complex-mediated inhibition of the TORC1 pathway. The BCR(KLHL25) ubiquitin ligase complex is involved in translational homeostasis by mediating ubiquitination and subsequent degradation of hypophosphorylated EIF4EBP1 (4E-BP1). The BCR(KLHL25) ubiquitin ligase complex is also involved in lipid synthesis by mediating ubiquitination and degradation of ACLY. The BCR(KBTBD8) complex acts by mediating monoubiquitination of NOLC1 and TCOF1, leading to remodel the translational program of differentiating cells in favor of neural crest specification. Involved in ubiquitination of cyclin E and of cyclin D1 (in vitro) thus involved in regulation of G1/S transition. Involved in the ubiquitination of KEAP1, ENC1 and KLHL41. In concert with ATF2 and RBX1, promotes degradation of KAT5 thereby attenuating its ability to acetylate and activate ATM. The BCR(KCTD17) E3 ubiquitin ligase complex mediates ubiquitination and degradation of TCHP, a down-regulator of cilium assembly, thereby inducing ciliogenesis. The BCR(KLHL24) E3 ubiquitin ligase complex mediates ubiquitination of KRT14, controls KRT14 levels during keratinocytes differentiation, and is essential for skin integrity. The BCR(KLHL18) E3 ubiquitin ligase complex mediates the ubiquitination of AURKA leading to its activation at the centrosome which is required for initiating mitotic entry. The BCR(KEAP1) E3 ubiquitin ligase complex acts as a key sensor of oxidative and electrophilic stress by mediating ubiquitination and degradation of NFE2L2/NRF2, a transcription factor regulating expression of many cytoprotective genes. As part of the CUL3(KBTBD6/7) E3 ubiquitin ligase complex functions mediates 'Lys-48' ubiquitination and proteasomal degradation of TIAM1. By controlling the ubiquitination of that RAC1 guanine exchange factors (GEF), regulates RAC1 signal transduction and downstream biological processes including the organization of the cytoskeleton, cell migration and cell proliferation. The BCR(KBTBD4) E3 ubiquitin ligase complex targets CoREST corepressor complex components RCOR1, KDM1A/LSD1 and HDAC2 for proteasomal degradation with RCOR1 likely to be the primary target while degradation of KDM1A and HDAC2 is likely due to their association with RCOR1. It also targets RCOR3, MIER2 and MIER3 for proteasomal degradation as well as associated proteins ZNF217 and RREB1 with degradation being dependent on the presence of an ELM2 domain in the target proteins. The BCR(ARMC5) complex mediates premature transcription termination of transcripts that are unfavorably configured for transcriptional elongation by mediating ubiquitination of Pol II subunit POLR2A. Required for 'Lys-63'-linked ubiquitination of large ribosomal subunit protein MRPL12. The sequence is that of Cullin-3 (Cul3) from Mus musculus (Mouse).